Reading from the N-terminus, the 304-residue chain is Homoserine kinase (304 aa).

Position 90–100 (90–100 (PLARGLGSSAS)) interacts with ATP.

Belongs to the GHMP kinase family. Homoserine kinase subfamily.

The protein resides in the cytoplasm. It carries out the reaction L-homoserine + ATP = O-phospho-L-homoserine + ADP + H(+). The protein operates within amino-acid biosynthesis; L-threonine biosynthesis; L-threonine from L-aspartate: step 4/5. Catalyzes the ATP-dependent phosphorylation of L-homoserine to L-homoserine phosphate. The chain is Homoserine kinase from Staphylococcus aureus (strain NCTC 8325 / PS 47).